Reading from the N-terminus, the 128-residue chain is MGVYQGRDLRKITGGKKNVSRGKRKFEIGSQPTETKVYSEDIREKARVLGGNAKVRLTYAAYANVINLSDGTAKKVKILEVIESSANREYARRGIIVKGSIIRTEIGKALVTSRPGQHGVINAILMQQ.

This sequence belongs to the eukaryotic ribosomal protein eS8 family. Part of the 30S ribosomal subunit.

The polypeptide is Small ribosomal subunit protein eS8 (Metallosphaera sedula (strain ATCC 51363 / DSM 5348 / JCM 9185 / NBRC 15509 / TH2)).